The primary structure comprises 343 residues: Arginine-hydroxylase NDUFAF5, mitochondrial (343 aa).

The N-terminal 29 residues, 1-29 (MLRRVVLSRLYARLGGPAVSAGRGGRRGV), are a transit peptide targeting the mitochondrion. The disordered stretch occupies residues 18-40 (AVSAGRGGRRGVASSVPPSGSTS).

It belongs to the methyltransferase superfamily. In terms of assembly, interacts with NDUFAF8, leading to stabilize NDUFAF5. Interacts with NDUFS7. Interacts with PYURF (via TRM112 domain); the interaction is direct and stabilizes NDUFAF5 protein.

Its subcellular location is the mitochondrion inner membrane. Functionally, arginine hydroxylase that mediates hydroxylation of 'Arg-111' of NDUFS7 and is involved in the assembly of mitochondrial NADH:ubiquinone oxidoreductase complex (complex I, MT-ND1) at early stages. May also have methyltransferase activity. The sequence is that of Arginine-hydroxylase NDUFAF5, mitochondrial from Rattus norvegicus (Rat).